The primary structure comprises 207 residues: Shikimate kinase (207 aa).

32–37 (GVGKST) contacts ATP. Ser-36 provides a ligand contact to Mg(2+). Substrate contacts are provided by Asp-54, Arg-78, and Gly-100. Arg-138 lines the ATP pocket. Substrate is bound at residue Arg-157.

This sequence belongs to the shikimate kinase family. Monomer. Requires Mg(2+) as cofactor.

The protein localises to the cytoplasm. It carries out the reaction shikimate + ATP = 3-phosphoshikimate + ADP + H(+). The protein operates within metabolic intermediate biosynthesis; chorismate biosynthesis; chorismate from D-erythrose 4-phosphate and phosphoenolpyruvate: step 5/7. In terms of biological role, catalyzes the specific phosphorylation of the 3-hydroxyl group of shikimic acid using ATP as a cosubstrate. This is Shikimate kinase from Bradyrhizobium diazoefficiens (strain JCM 10833 / BCRC 13528 / IAM 13628 / NBRC 14792 / USDA 110).